Consider the following 72-residue polypeptide: Translation initiation factor IF-1 (72 aa).

Positions 1–72 (MSKTDVVEIE…TKGRIIWRDK (72 aa)) constitute an S1-like domain.

It belongs to the IF-1 family. Component of the 30S ribosomal translation pre-initiation complex which assembles on the 30S ribosome in the order IF-2 and IF-3, IF-1 and N-formylmethionyl-tRNA(fMet); mRNA recruitment can occur at any time during PIC assembly.

The protein resides in the cytoplasm. Functionally, one of the essential components for the initiation of protein synthesis. Stabilizes the binding of IF-2 and IF-3 on the 30S subunit to which N-formylmethionyl-tRNA(fMet) subsequently binds. Helps modulate mRNA selection, yielding the 30S pre-initiation complex (PIC). Upon addition of the 50S ribosomal subunit IF-1, IF-2 and IF-3 are released leaving the mature 70S translation initiation complex. The chain is Translation initiation factor IF-1 from Lachnoclostridium phytofermentans (strain ATCC 700394 / DSM 18823 / ISDg) (Clostridium phytofermentans).